The sequence spans 332 residues: Glycerol-3-phosphate dehydrogenase [NAD(P)+] (332 aa).

NADPH is bound by residues Trp13, Lys34, and Lys108. 3 residues coordinate sn-glycerol 3-phosphate: Lys108, Gly136, and Ser138. An NADPH-binding site is contributed by Ala140. Sn-glycerol 3-phosphate is bound by residues Lys191, Asp244, Ser254, Arg255, and Asn256. Residue Lys191 is the Proton acceptor of the active site. Residue Arg255 coordinates NADPH. Val279 and Glu281 together coordinate NADPH.

It belongs to the NAD-dependent glycerol-3-phosphate dehydrogenase family.

The protein localises to the cytoplasm. The enzyme catalyses sn-glycerol 3-phosphate + NAD(+) = dihydroxyacetone phosphate + NADH + H(+). It carries out the reaction sn-glycerol 3-phosphate + NADP(+) = dihydroxyacetone phosphate + NADPH + H(+). It functions in the pathway membrane lipid metabolism; glycerophospholipid metabolism. Its function is as follows. Catalyzes the reduction of the glycolytic intermediate dihydroxyacetone phosphate (DHAP) to sn-glycerol 3-phosphate (G3P), the key precursor for phospholipid synthesis. In Francisella tularensis subsp. tularensis (strain FSC 198), this protein is Glycerol-3-phosphate dehydrogenase [NAD(P)+].